Reading from the N-terminus, the 1107-residue chain is Dynein axonemal assembly factor 1 homolog (1107 aa).

6 LRR repeats span residues 34–56 (HLND…EEYV), 57–78 (GLKC…EYQT), 79–100 (ELKC…DSCK), 101–122 (QLDT…GHDI), 125–146 (VLNT…DHLR), and 150–171 (FVSV…KILG). An LRRCT domain is found at 184–223 (NPVVNEIPSYRKTLILECKNLTYLDTRPVFDRDRACAEAW). Disordered stretches follow at residues 258 to 281 (HRGD…KASK), 428 to 487 (NESP…TLNV), 500 to 608 (ESKD…LEKE), 780 to 810 (KEEP…EHEQ), 834 to 855 (SSED…AEED), and 1070 to 1107 (AAHA…DNCD). Residues 428–437 (NESPLTSPSF) show a composition bias toward polar residues. A compositionally biased stretch (acidic residues) spans 446–459 (EEIEPTDVEEEQQI). Residues 500–512 (ESKDGELISKVES) are compositionally biased toward basic and acidic residues. Over residues 531 to 544 (DNSESEPTDITNED) the composition is skewed to acidic residues. Residues 549–560 (SSSVSVTSSTDS) are compositionally biased toward low complexity. Over residues 581–597 (NYRQDSTTSTDSENEVS) the composition is skewed to polar residues. Residues 801-810 (LEVHSSEHEQ) show a composition bias toward basic and acidic residues. Residues 844–855 (DSSESSDSAEED) are compositionally biased toward acidic residues. The segment covering 1083-1097 (VESKPVEIDGTKEET) has biased composition (basic and acidic residues). Positions 1098–1107 (VDSELADNCD) are enriched in acidic residues.

Belongs to the DNAAF1 family.

It is found in the cell projection. It localises to the cilium. Its function is as follows. Cilium-specific protein required for cilia structures. In Aedes aegypti (Yellowfever mosquito), this protein is Dynein axonemal assembly factor 1 homolog.